The chain runs to 114 residues: T cell receptor beta variable 5-6 (114 aa).

An N-terminal signal peptide occupies residues 1–21 (MGPGLLCWALLCLLGAGLVDA). Residues 22–114 (GVTQSPTHLI…SALYLCASSL (93 aa)) form the Ig-like domain. Cys-42 and Cys-110 are oxidised to a cystine. Asn-90 carries an N-linked (GlcNAc...) asparagine glycan.

As to quaternary structure, alpha-beta TR is a heterodimer composed of an alpha and beta chain; disulfide-linked. The alpha-beta TR is associated with the transmembrane signaling CD3 coreceptor proteins to form the TR-CD3 (TcR or TCR). The assembly of alpha-beta TR heterodimers with CD3 occurs in the endoplasmic reticulum where a single alpha-beta TR heterodimer associates with one CD3D-CD3E heterodimer, one CD3G-CD3E heterodimer and one CD247 homodimer forming a stable octameric structure. CD3D-CD3E and CD3G-CD3E heterodimers preferentially associate with TR alpha and TR beta chains, respectively. The association of the CD247 homodimer is the last step of TcR assembly in the endoplasmic reticulum and is required for transport to the cell surface.

The protein localises to the cell membrane. In terms of biological role, v region of the variable domain of T cell receptor (TR) beta chain that participates in the antigen recognition. Alpha-beta T cell receptors are antigen specific receptors which are essential to the immune response and are present on the cell surface of T lymphocytes. Recognize peptide-major histocompatibility (MH) (pMH) complexes that are displayed by antigen presenting cells (APC), a prerequisite for efficient T cell adaptive immunity against pathogens. Binding of alpha-beta TR to pMH complex initiates TR-CD3 clustering on the cell surface and intracellular activation of LCK that phosphorylates the ITAM motifs of CD3G, CD3D, CD3E and CD247 enabling the recruitment of ZAP70. In turn ZAP70 phosphorylates LAT, which recruits numerous signaling molecules to form the LAT signalosome. The LAT signalosome propagates signal branching to three major signaling pathways, the calcium, the mitogen-activated protein kinase (MAPK) kinase and the nuclear factor NF-kappa-B (NF-kB) pathways, leading to the mobilization of transcription factors that are critical for gene expression and essential for T cell growth and differentiation. The T cell repertoire is generated in the thymus, by V-(D)-J rearrangement. This repertoire is then shaped by intrathymic selection events to generate a peripheral T cell pool of self-MH restricted, non-autoaggressive T cells. Post-thymic interaction of alpha-beta TR with the pMH complexes shapes TR structural and functional avidity. The chain is T cell receptor beta variable 5-6 from Homo sapiens (Human).